Here is a 259-residue protein sequence, read N- to C-terminus: UPF0246 protein NGO_0461 (259 aa).

This sequence belongs to the UPF0246 family.

In Neisseria gonorrhoeae (strain ATCC 700825 / FA 1090), this protein is UPF0246 protein NGO_0461.